Reading from the N-terminus, the 146-residue chain is Anti-sigma F factor (146 aa).

The protein belongs to the anti-sigma-factor family.

It catalyses the reaction L-seryl-[protein] + ATP = O-phospho-L-seryl-[protein] + ADP + H(+). The enzyme catalyses L-threonyl-[protein] + ATP = O-phospho-L-threonyl-[protein] + ADP + H(+). Binds to sigma F and blocks its ability to form an RNA polymerase holoenzyme (E-sigma F). Phosphorylates SpoIIAA on a serine residue. This phosphorylation may enable SpoIIAA to act as an anti-anti-sigma factor that counteracts SpoIIAB and thus releases sigma F from inhibition. This Bacillus cytotoxicus (strain DSM 22905 / CIP 110041 / 391-98 / NVH 391-98) protein is Anti-sigma F factor.